The chain runs to 343 residues: Phosphate acyltransferase (343 aa).

This sequence belongs to the PlsX family. In terms of assembly, homodimer. Probably interacts with PlsY.

The protein resides in the cytoplasm. The catalysed reaction is a fatty acyl-[ACP] + phosphate = an acyl phosphate + holo-[ACP]. It functions in the pathway lipid metabolism; phospholipid metabolism. Catalyzes the reversible formation of acyl-phosphate (acyl-PO(4)) from acyl-[acyl-carrier-protein] (acyl-ACP). This enzyme utilizes acyl-ACP as fatty acyl donor, but not acyl-CoA. This Haemophilus ducreyi (strain 35000HP / ATCC 700724) protein is Phosphate acyltransferase.